The chain runs to 87 residues: uncharacterized protein (87 aa).

Transmembrane regions (helical) follow at residues 10 to 30 (VAFT…FSIG) and 43 to 63 (GYYI…QKVT).

The protein resides in the cell membrane. This is an uncharacterized protein from Bacillus subtilis (strain 168).